The primary structure comprises 207 residues: dTTP/UTP pyrophosphatase (207 aa).

The active-site Proton acceptor is the Asp-68.

This sequence belongs to the Maf family. YhdE subfamily. Requires a divalent metal cation as cofactor.

It localises to the cytoplasm. It catalyses the reaction dTTP + H2O = dTMP + diphosphate + H(+). It carries out the reaction UTP + H2O = UMP + diphosphate + H(+). Nucleoside triphosphate pyrophosphatase that hydrolyzes dTTP and UTP. May have a dual role in cell division arrest and in preventing the incorporation of modified nucleotides into cellular nucleic acids. This Staphylothermus marinus (strain ATCC 43588 / DSM 3639 / JCM 9404 / F1) protein is dTTP/UTP pyrophosphatase.